The sequence spans 288 residues: Homoserine kinase (288 aa).

An ATP-binding site is contributed by 79–89 (PPARGLGSSSA).

Belongs to the GHMP kinase family. Homoserine kinase subfamily.

The protein localises to the cytoplasm. It catalyses the reaction L-homoserine + ATP = O-phospho-L-homoserine + ADP + H(+). It participates in amino-acid biosynthesis; L-threonine biosynthesis; L-threonine from L-aspartate: step 4/5. Catalyzes the ATP-dependent phosphorylation of L-homoserine to L-homoserine phosphate. The chain is Homoserine kinase from Listeria innocua serovar 6a (strain ATCC BAA-680 / CLIP 11262).